The primary structure comprises 283 residues: Thymidylate synthase (283 aa).

R22 lines the dUMP pocket. The active-site Nucleophile is C160. Residues 180–183 (RSCD), N191, and 221–223 (HIY) each bind dUMP. D183 is a (6R)-5,10-methylene-5,6,7,8-tetrahydrofolate binding site. A282 is a binding site for (6R)-5,10-methylene-5,6,7,8-tetrahydrofolate.

It belongs to the thymidylate synthase family. Bacterial-type ThyA subfamily. In terms of assembly, homodimer.

The protein localises to the cytoplasm. The catalysed reaction is dUMP + (6R)-5,10-methylene-5,6,7,8-tetrahydrofolate = 7,8-dihydrofolate + dTMP. Its pathway is pyrimidine metabolism; dTTP biosynthesis. Catalyzes the reductive methylation of 2'-deoxyuridine-5'-monophosphate (dUMP) to 2'-deoxythymidine-5'-monophosphate (dTMP) while utilizing 5,10-methylenetetrahydrofolate (mTHF) as the methyl donor and reductant in the reaction, yielding dihydrofolate (DHF) as a by-product. This enzymatic reaction provides an intracellular de novo source of dTMP, an essential precursor for DNA biosynthesis. This chain is Thymidylate synthase, found in Colwellia psychrerythraea (strain 34H / ATCC BAA-681) (Vibrio psychroerythus).